Reading from the N-terminus, the 133-residue chain is Cytochrome c-type biogenesis protein CcmE (133 aa).

Topologically, residues 1-7 are cytoplasmic; the sequence is MKRKHKR. Residues 8–28 form a helical; Signal-anchor for type II membrane protein membrane-spanning segment; that stretch reads LLFIIVTFIIFGSSVVIVLNK. The Periplasmic portion of the chain corresponds to 29–133; that stretch reads LRSNISFFFT…NYKPGKYRAK (105 aa). The heme site is built by His121 and Tyr125.

It belongs to the CcmE/CycJ family.

The protein localises to the cell inner membrane. In terms of biological role, heme chaperone required for the biogenesis of c-type cytochromes. Transiently binds heme delivered by CcmC and transfers the heme to apo-cytochromes in a process facilitated by CcmF and CcmH. This Ehrlichia canis (strain Jake) protein is Cytochrome c-type biogenesis protein CcmE.